A 603-amino-acid chain; its full sequence is Matrix metalloproteinase-17 (603 aa).

Positions M1 to G35 are cleaved as a signal peptide. Residues G36–R125 constitute a propeptide that is removed on maturation. A Cysteine switch motif is present at residues P108–L115. C110 contributes to the Zn(2+) binding site. Residue N137 is glycosylated (N-linked (GlcNAc...) asparagine). A Zn(2+)-binding site is contributed by H248. Residue E249 is part of the active site. H252 and H258 together coordinate Zn(2+). The segment at S301–P329 is disordered. N318 is a glycosylation site (N-linked (GlcNAc...) asparagine). C332 and C523 are oxidised to a cystine. Hemopexin repeat units follow at residues S333–L378, L382–P427, P428–V475, and P476–C523. A disordered region spans residues D537–P571. S565 carries GPI-anchor amidated serine lipidation. The propeptide at G566–L603 is removed in mature form.

Belongs to the peptidase M10A family. Zn(2+) is required as a cofactor. It depends on Ca(2+) as a cofactor. In terms of processing, the precursor is cleaved by a furin endopeptidase. Expressed in brain, leukocytes, colon, ovary testis and breast cancer. Expressed also in many transformed and non-transformed cell types.

Its subcellular location is the cell membrane. It is found in the secreted. The protein resides in the extracellular space. The protein localises to the extracellular matrix. Its function is as follows. Endopeptidase that degrades various components of the extracellular matrix, such as fibrin. May be involved in the activation of membrane-bound precursors of growth factors or inflammatory mediators, such as tumor necrosis factor-alpha. May also be involved in tumoral process. Cleaves pro-TNF-alpha at the '74-Ala-|-Gln-75' site. Not obvious if able to proteolytically activate progelatinase A. Does not hydrolyze collagen types I, II, III, IV and V, gelatin, fibronectin, laminin, decorin nor alpha1-antitrypsin. The sequence is that of Matrix metalloproteinase-17 (MMP17) from Homo sapiens (Human).